The sequence spans 75 residues: UPF0346 protein LSL_0716 (75 aa).

It belongs to the UPF0346 family.

The sequence is that of UPF0346 protein LSL_0716 from Ligilactobacillus salivarius (strain UCC118) (Lactobacillus salivarius).